Consider the following 383-residue polypeptide: S-adenosylmethionine synthase (383 aa).

Residue His15 participates in ATP binding. Position 17 (Asp17) interacts with Mg(2+). K(+) is bound at residue Glu43. The L-methionine site is built by Glu56 and Gln99. The interval 99–109 (QSPDINQGVDR) is flexible loop. ATP is bound by residues 164 to 166 (DAK), 230 to 231 (RF), Asp239, 245 to 246 (RK), Ala262, and Lys266. Asp239 is a binding site for L-methionine. Residue Lys270 coordinates L-methionine.

It belongs to the AdoMet synthase family. In terms of assembly, homotetramer; dimer of dimers. It depends on Mg(2+) as a cofactor. The cofactor is K(+).

Its subcellular location is the cytoplasm. The catalysed reaction is L-methionine + ATP + H2O = S-adenosyl-L-methionine + phosphate + diphosphate. It functions in the pathway amino-acid biosynthesis; S-adenosyl-L-methionine biosynthesis; S-adenosyl-L-methionine from L-methionine: step 1/1. In terms of biological role, catalyzes the formation of S-adenosylmethionine (AdoMet) from methionine and ATP. The overall synthetic reaction is composed of two sequential steps, AdoMet formation and the subsequent tripolyphosphate hydrolysis which occurs prior to release of AdoMet from the enzyme. The protein is S-adenosylmethionine synthase of Shewanella loihica (strain ATCC BAA-1088 / PV-4).